A 444-amino-acid polypeptide reads, in one-letter code: MISSKNDDIAAIATAHGIGSICIIRLSGSTALQSALKLTKISNLSPRLATLTKIYSLDKEFLDEAIMIYFKAPASFTGEDVVEFHTHGGFVVADMILNELVKLGVRLAEPGEFSKRAFLNDKLDLAKAEAIQGLINSRSEAAAKILARQMRGDLSRYVEQMRNELVKTLAFVETSIDYADDDLPDDLLEQIKTMLEANAAKLDKIVQISEQRRGLIDGFKVAIVGKPNVGKSSILNSLLSYERAIISDEAGTTRDRIEENFKVGTHLVRIIDTAGIRKNAGKIEKIGIRYSLAAIEEADIVLAVFDSSSASDEQDERIVELVKNSGKKVFFILNKSDLAFKFDLDLSPSIKISAKKGADEIVGRLRDYLDSQDSSEMMLSSNHQIKQCKDASVAIKRALNLLGDELELFAYEINTAIAAISAITRSFERSEILDEMFSHFCLGK.

3 residues coordinate (6S)-5-formyl-5,6,7,8-tetrahydrofolate: arginine 25, glutamate 83, and lysine 122. A TrmE-type G domain is found at 218-370 (GFKVAIVGKP…IVGRLRDYLD (153 aa)). GTP-binding positions include 228–233 (NVGKSS), 247–253 (SDEAGTT), and 272–275 (DTAG). Mg(2+) contacts are provided by serine 232 and threonine 253. Residue lysine 444 coordinates (6S)-5-formyl-5,6,7,8-tetrahydrofolate.

Belongs to the TRAFAC class TrmE-Era-EngA-EngB-Septin-like GTPase superfamily. TrmE GTPase family. In terms of assembly, homodimer. Heterotetramer of two MnmE and two MnmG subunits. Requires K(+) as cofactor.

Its subcellular location is the cytoplasm. In terms of biological role, exhibits a very high intrinsic GTPase hydrolysis rate. Involved in the addition of a carboxymethylaminomethyl (cmnm) group at the wobble position (U34) of certain tRNAs, forming tRNA-cmnm(5)s(2)U34. This Campylobacter curvus (strain 525.92) protein is tRNA modification GTPase MnmE.